A 156-amino-acid chain; its full sequence is uncharacterized protein (156 aa).

The protein resides in the mitochondrion. This is an uncharacterized protein from Paramecium tetraurelia.